The following is a 230-amino-acid chain: 5'-methylthioadenosine/S-adenosylhomocysteine nucleosidase (230 aa).

The Proton acceptor role is filled by Glu-12. Residues Gly-78, Met-153, and 174–175 (ME) each bind substrate. Asp-198 serves as the catalytic Proton donor.

It belongs to the PNP/UDP phosphorylase family. MtnN subfamily.

The catalysed reaction is S-adenosyl-L-homocysteine + H2O = S-(5-deoxy-D-ribos-5-yl)-L-homocysteine + adenine. It carries out the reaction S-methyl-5'-thioadenosine + H2O = 5-(methylsulfanyl)-D-ribose + adenine. It catalyses the reaction 5'-deoxyadenosine + H2O = 5-deoxy-D-ribose + adenine. Its pathway is amino-acid biosynthesis; L-methionine biosynthesis via salvage pathway; S-methyl-5-thio-alpha-D-ribose 1-phosphate from S-methyl-5'-thioadenosine (hydrolase route): step 1/2. Functionally, catalyzes the irreversible cleavage of the glycosidic bond in both 5'-methylthioadenosine (MTA) and S-adenosylhomocysteine (SAH/AdoHcy) to adenine and the corresponding thioribose, 5'-methylthioribose and S-ribosylhomocysteine, respectively. Also cleaves 5'-deoxyadenosine, a toxic by-product of radical S-adenosylmethionine (SAM) enzymes, into 5-deoxyribose and adenine. The polypeptide is 5'-methylthioadenosine/S-adenosylhomocysteine nucleosidase (Tolumonas auensis (strain DSM 9187 / NBRC 110442 / TA 4)).